Consider the following 233-residue polypeptide: Orotidine 5'-phosphate decarboxylase (233 aa).

Substrate is bound by residues aspartate 12, lysine 34, 61-70 (DWKLHDIGAT), threonine 116, arginine 181, glutamine 190, glycine 210, and arginine 211. Lysine 63 functions as the Proton donor in the catalytic mechanism.

The protein belongs to the OMP decarboxylase family. Type 1 subfamily. As to quaternary structure, homodimer.

It carries out the reaction orotidine 5'-phosphate + H(+) = UMP + CO2. It participates in pyrimidine metabolism; UMP biosynthesis via de novo pathway; UMP from orotate: step 2/2. In terms of biological role, catalyzes the decarboxylation of orotidine 5'-monophosphate (OMP) to uridine 5'-monophosphate (UMP). This Caulobacter vibrioides (strain ATCC 19089 / CIP 103742 / CB 15) (Caulobacter crescentus) protein is Orotidine 5'-phosphate decarboxylase.